A 253-amino-acid polypeptide reads, in one-letter code: MPFLKTLFRGALCSIACGASLFCAADVYRIIRNYPELMPVSYMDEKGSPTGFETELIRKIAEQAQLDLKEEFVANFGDTLTALENGKADLAMATISVTPARQQIFDFTTPYFRVNPFAFITKDDSIKTIQDLANKKVSVWTGSNHEQKIKEIQKEGTGSVIPAKSIFLAVKAVIQGEADVAVGDDAYMLNFADRYKQHNLKAVIDRSTEPESYAIAVRKGDQALKKKIDDALLQLKRDGTIDALTKKWYPNRT.

The N-terminal stretch at 1-23 is a signal peptide; the sequence is MPFLKTLFRGALCSIACGASLFC.

This sequence belongs to the bacterial solute-binding protein 3 family.

It localises to the periplasm. The protein is Amino-acid-binding protein AabA (aabA) of Dichelobacter nodosus (Bacteroides nodosus).